Reading from the N-terminus, the 187-residue chain is Dihydrofolate reductase 2, mitochondrial (187 aa).

The region spanning 4–185 is the DHFR domain; sequence LLNCIVAVSQ…IKYKFEVCEK (182 aa). Residues A10 and 16 to 22 contribute to the NADP(+) site; that span reads GIGKNGD. 31-36 provides a ligand contact to substrate; sequence EFRYFQ. 55–57 lines the NADP(+) pocket; that stretch reads RKT. Substrate is bound at residue R71. NADP(+) is bound by residues 77-79 and 117-124; these read SRE and GGSSVYKE.

Belongs to the dihydrofolate reductase family. As to expression, expressed in numerous cell lines.

The protein localises to the mitochondrion. Its subcellular location is the mitochondrion matrix. It is found in the mitochondrion inner membrane. The catalysed reaction is (6S)-5,6,7,8-tetrahydrofolate + NADP(+) = 7,8-dihydrofolate + NADPH + H(+). The protein operates within cofactor biosynthesis; tetrahydrofolate biosynthesis; 5,6,7,8-tetrahydrofolate from 7,8-dihydrofolate: step 1/1. Its function is as follows. Key enzyme in folate metabolism. Contributes to the de novo mitochondrial thymidylate biosynthesis pathway. Required to prevent uracil accumulation in mtDNA. Binds its own mRNA and that of DHFR. The protein is Dihydrofolate reductase 2, mitochondrial of Homo sapiens (Human).